A 400-amino-acid chain; its full sequence is NADH-quinone oxidoreductase subunit D (400 aa).

It belongs to the complex I 49 kDa subunit family. In terms of assembly, NDH-1 is composed of 14 different subunits. Subunits NuoB, C, D, E, F, and G constitute the peripheral sector of the complex.

It is found in the cell inner membrane. It carries out the reaction a quinone + NADH + 5 H(+)(in) = a quinol + NAD(+) + 4 H(+)(out). Its function is as follows. NDH-1 shuttles electrons from NADH, via FMN and iron-sulfur (Fe-S) centers, to quinones in the respiratory chain. The immediate electron acceptor for the enzyme in this species is believed to be a menaquinone. Couples the redox reaction to proton translocation (for every two electrons transferred, four hydrogen ions are translocated across the cytoplasmic membrane), and thus conserves the redox energy in a proton gradient. The polypeptide is NADH-quinone oxidoreductase subunit D (Chlorobaculum tepidum (strain ATCC 49652 / DSM 12025 / NBRC 103806 / TLS) (Chlorobium tepidum)).